The chain runs to 139 residues: UPF0216 protein MJ1224 (139 aa).

It belongs to the UPF0216 family.

This chain is UPF0216 protein MJ1224, found in Methanocaldococcus jannaschii (strain ATCC 43067 / DSM 2661 / JAL-1 / JCM 10045 / NBRC 100440) (Methanococcus jannaschii).